We begin with the raw amino-acid sequence, 194 residues long: FK506-binding protein 3 (194 aa).

A signal peptide spans 1–19 (MNKFLIALLVLATLAVSFS). Positions 44-133 (GDYISLKYVG…YFDLEVVSIE (90 aa)) constitute a PPIase FKBP-type domain. Residues 148 to 168 (VGTIIAFSMLAGFIVLVKFII) traverse the membrane as a helical segment. The interval 173–194 (DESNSKKPAPGKPKKTKAAKQN) is disordered. The segment covering 184 to 194 (KPKKTKAAKQN) has biased composition (basic residues).

This sequence belongs to the FKBP-type PPIase family.

Its subcellular location is the membrane. The enzyme catalyses [protein]-peptidylproline (omega=180) = [protein]-peptidylproline (omega=0). With respect to regulation, inhibited by both FK506 and rapamycin. PPIases accelerate the folding of proteins by catalyzing the cis-trans isomerization of proline imidic peptide bonds in oligopeptides. The chain is FK506-binding protein 3 (fkbp3) from Dictyostelium discoideum (Social amoeba).